Reading from the N-terminus, the 370-residue chain is Phosphate acyltransferase (370 aa).

Belongs to the PlsX family. As to quaternary structure, homodimer. Probably interacts with PlsY.

Its subcellular location is the cytoplasm. The enzyme catalyses a fatty acyl-[ACP] + phosphate = an acyl phosphate + holo-[ACP]. The protein operates within lipid metabolism; phospholipid metabolism. Functionally, catalyzes the reversible formation of acyl-phosphate (acyl-PO(4)) from acyl-[acyl-carrier-protein] (acyl-ACP). This enzyme utilizes acyl-ACP as fatty acyl donor, but not acyl-CoA. The sequence is that of Phosphate acyltransferase from Paracoccus denitrificans (strain Pd 1222).